The chain runs to 120 residues: Large ribosomal subunit protein bL19 (120 aa).

The protein belongs to the bacterial ribosomal protein bL19 family.

This protein is located at the 30S-50S ribosomal subunit interface and may play a role in the structure and function of the aminoacyl-tRNA binding site. This Chlorobium chlorochromatii (strain CaD3) protein is Large ribosomal subunit protein bL19.